The sequence spans 201 residues: MAEKFIQHTGLVVPLDAANVDTDAIIPKQFLQKVTRTGFGAHLFNDWRFLDEQGQQPNPAFVLNFPEYQGASILLARENFGCGSSREHAPWALTDYGFKVVIAPSFADIFYGNSFNNQLLPVKLSEEAVDELFALAQANPGIHFEVDLAAQVVKAGDKRYPFEIDAFRRHCMMNGLDSIGLTLQHEDAIAAYENKQPAFMR.

It belongs to the LeuD family. LeuD type 1 subfamily. As to quaternary structure, heterodimer of LeuC and LeuD.

It catalyses the reaction (2R,3S)-3-isopropylmalate = (2S)-2-isopropylmalate. It participates in amino-acid biosynthesis; L-leucine biosynthesis; L-leucine from 3-methyl-2-oxobutanoate: step 2/4. In terms of biological role, catalyzes the isomerization between 2-isopropylmalate and 3-isopropylmalate, via the formation of 2-isopropylmaleate. The polypeptide is 3-isopropylmalate dehydratase small subunit (Salmonella arizonae (strain ATCC BAA-731 / CDC346-86 / RSK2980)).